A 296-amino-acid chain; its full sequence is MAGGTLQDRSEEEDVRVGVDRFPERQPIGTAADDLGRDYSEPPAAPLFEASELSSWSFYRAGIAEFVATFLFLYVTVLTVMGVSKSPSKCGTVGIQGIAWAFGGMIFALVYCTAGVSGGHINPAVTFGLLLARKLSLTRAVYYVVMQCLGAVCGAGVVKAFGSALYESAGGGANAVSPGYTKGDGLGAEVVGTFVLVYTVFSATDAKRTARDSHVPALAPLPIGFAVFLVHLATIPITGTGINPARSLGAAIIYDNPHGWHGHWIFWVGPFAGAALAAVYHQVVLRAIPFKSSAHY.

A run of 2 helical transmembrane segments spans residues 63-83 and 98-120; these read IAEF…VMGV and IAWA…SGGH. The NPA 1 signature appears at 122–124; it reads NPA. The next 3 helical transmembrane spans lie at 141-161, 183-203, and 217-237; these read VYYV…VKAF, GDGL…VFSA, and ALAP…TIPI. Residues 243 to 245 carry the NPA 2 motif; sequence NPA. Residues 265–285 form a helical membrane-spanning segment; that stretch reads IFWVGPFAGAALAAVYHQVVL.

It belongs to the MIP/aquaporin (TC 1.A.8) family. PIP (TC 1.A.8.11) subfamily.

The protein resides in the cell membrane. In terms of biological role, aquaporins facilitate the transport of water and small neutral solutes across cell membranes. The chain is Aquaporin PIP1-6 (PIP1-6) from Zea mays (Maize).